The primary structure comprises 537 residues: [Pyruvate dehydrogenase [acetyl-transferring]]-phosphatase 1, mitochondrial (537 aa).

Residues Met1–Tyr71 constitute a mitochondrion transit peptide. A PPM-type phosphatase domain is found at Ile109 to Phe525. Mn(2+) contacts are provided by Asp144 and Gly145. N6-acetyllysine is present on Lys202. Positions 418 and 516 each coordinate Mn(2+).

It belongs to the PP2C family. In terms of assembly, heterodimer of a catalytic (PDP1) and a regulatory (PDPR) subunit. The cofactor is Mn(2+). Requires Mg(2+) as cofactor.

The protein resides in the mitochondrion. It catalyses the reaction O-phospho-L-seryl-[pyruvate dehydrogenase E1 alpha subunit] + H2O = L-seryl-[pyruvate dehydrogenase E1 alpha subunit] + phosphate. Its activity is regulated as follows. Magnesium-dependent and calcium-stimulated. PDP1 activity strongly depends on its Ca(2+)-dependent binding to the lipoyl domain of E2 subunit of component of the pyruvate dehydrogenase complex. Functionally, mitochondrial enzyme that catalyzes the dephosphorylation and concomitant reactivation of the alpha subunit of the E1 component of the pyruvate dehydrogenase complex (PDC), thereby stimulating the conversion of pyruvate into acetyl-CoA. The protein is [Pyruvate dehydrogenase [acetyl-transferring]]-phosphatase 1, mitochondrial of Homo sapiens (Human).